The primary structure comprises 280 residues: Protoheme IX farnesyltransferase (280 aa).

9 helical membrane passes run 2–21 (VVAT…RAGL), 30–50 (AAVP…VVSG), 83–103 (LALW…LVGV), 105–125 (ATTG…YTPL), 131–151 (LSLP…WTSV), 160–180 (FLLF…ISLF), 206–226 (IVGY…LGVA), 229–249 (VYLG…VYGL), and 260–280 (QVFF…MIGA).

The protein belongs to the UbiA prenyltransferase family. Protoheme IX farnesyltransferase subfamily.

It is found in the cell inner membrane. The catalysed reaction is heme b + (2E,6E)-farnesyl diphosphate + H2O = Fe(II)-heme o + diphosphate. The protein operates within porphyrin-containing compound metabolism; heme O biosynthesis; heme O from protoheme: step 1/1. Functionally, converts heme B (protoheme IX) to heme O by substitution of the vinyl group on carbon 2 of heme B porphyrin ring with a hydroxyethyl farnesyl side group. In Sorangium cellulosum (strain So ce56) (Polyangium cellulosum (strain So ce56)), this protein is Protoheme IX farnesyltransferase.